The chain runs to 167 residues: uncharacterized protein (167 aa).

Positions 48, 127, and 131 each coordinate a divalent metal cation.

The protein belongs to the DinB family.

This is an uncharacterized protein from Bacillus subtilis (strain 168).